We begin with the raw amino-acid sequence, 510 residues long: NAD(P)H-quinone oxidoreductase subunit 2 A, chloroplastic (510 aa).

The next 12 membrane-spanning stretches (helical) occupy residues 24–44 (LLLFHGSFIFPECILIFGLIL), 59–79 (WFYFISSTTLVMSITALLFRW), 99–119 (IFQFLILLCSTLCIPLSVEYI), 124–144 (MAITEFLLFVLTATLGGMFLC), 149–169 (LITLFVAPECFSLCSYLLSGY), 183–203 (YLLMGGASSSILVHGFSWLYG), 229–249 (ISIALISITVGIGFKLSPAPF), 295–315 (WHLLLEILAILSMILGNLIAI), 323–343 (MLAYSSIGQIGYVIIGIIVGD), 354–374 (YMLFYISMNLGTFACIVSFGL), 395–415 (ALSLALCLLSLGGLPPLAGFF), and 418–438 (LHLFWCGWQAGLYFLVSIGLL).

Belongs to the complex I subunit 2 family. As to quaternary structure, NDH is composed of at least 16 different subunits, 5 of which are encoded in the nucleus.

The protein localises to the plastid. Its subcellular location is the chloroplast thylakoid membrane. The catalysed reaction is a plastoquinone + NADH + (n+1) H(+)(in) = a plastoquinol + NAD(+) + n H(+)(out). The enzyme catalyses a plastoquinone + NADPH + (n+1) H(+)(in) = a plastoquinol + NADP(+) + n H(+)(out). Its function is as follows. NDH shuttles electrons from NAD(P)H:plastoquinone, via FMN and iron-sulfur (Fe-S) centers, to quinones in the photosynthetic chain and possibly in a chloroplast respiratory chain. The immediate electron acceptor for the enzyme in this species is believed to be plastoquinone. Couples the redox reaction to proton translocation, and thus conserves the redox energy in a proton gradient. The chain is NAD(P)H-quinone oxidoreductase subunit 2 A, chloroplastic from Dioscorea elephantipes (Elephant's foot yam).